Consider the following 428-residue polypeptide: Trigger factor (428 aa).

Residues 163 to 248 (GDMVVIDYKG…VHEIKEKELP (86 aa)) form the PPIase FKBP-type domain.

Belongs to the FKBP-type PPIase family. Tig subfamily.

It is found in the cytoplasm. It carries out the reaction [protein]-peptidylproline (omega=180) = [protein]-peptidylproline (omega=0). Involved in protein export. Acts as a chaperone by maintaining the newly synthesized protein in an open conformation. Functions as a peptidyl-prolyl cis-trans isomerase. This is Trigger factor from Alkaliphilus metalliredigens (strain QYMF).